The sequence spans 176 residues: NAD(P)H-quinone oxidoreductase subunit 6, chloroplastic (176 aa).

The next 5 helical transmembrane spans lie at 10–30 (FLLVFLGSGLILGGLGVVLLP), 32–52 (PIYSAFSLGLVLICTSLFYIL), 61–81 (AQLLIYVGAINVLIIFAVMFM), 92–112 (LWTVGDGITSMVCISLFISLI), and 152–172 (FFLPFELISIILLVALIGAIA).

It belongs to the complex I subunit 6 family. NDH is composed of at least 16 different subunits, 5 of which are encoded in the nucleus.

The protein localises to the plastid. The protein resides in the chloroplast thylakoid membrane. The enzyme catalyses a plastoquinone + NADH + (n+1) H(+)(in) = a plastoquinol + NAD(+) + n H(+)(out). It catalyses the reaction a plastoquinone + NADPH + (n+1) H(+)(in) = a plastoquinol + NADP(+) + n H(+)(out). Functionally, NDH shuttles electrons from NAD(P)H:plastoquinone, via FMN and iron-sulfur (Fe-S) centers, to quinones in the photosynthetic chain and possibly in a chloroplast respiratory chain. The immediate electron acceptor for the enzyme in this species is believed to be plastoquinone. Couples the redox reaction to proton translocation, and thus conserves the redox energy in a proton gradient. This is NAD(P)H-quinone oxidoreductase subunit 6, chloroplastic (ndhG) from Solanum tuberosum (Potato).